The chain runs to 223 residues: Acetate CoA-transferase subunit beta (223 aa).

Glutamate 46 is an active-site residue.

It belongs to the 3-oxoacid CoA-transferase subunit B family. As to quaternary structure, heterotetramer composed of two alpha subunits (AtoD) and two beta subunits (AtoA).

The enzyme catalyses an acyl-CoA + acetate = a carboxylate + acetyl-CoA. The catalysed reaction is acetoacetate + acetyl-CoA = acetoacetyl-CoA + acetate. It functions in the pathway lipid metabolism; short-chain fatty acid metabolism. In terms of biological role, coenzyme A transferase which is involved in short-chain fatty acid degradation and catalyzes the activation of short-chain fatty acids to their respective CoA thiolesters. The protein is Acetate CoA-transferase subunit beta (atoA) of Haemophilus influenzae (strain ATCC 51907 / DSM 11121 / KW20 / Rd).